Here is a 443-residue protein sequence, read N- to C-terminus: uncharacterized protein (443 aa).

A run of 10 helical transmembrane segments spans residues Val7–Thr29, Tyr68–Thr87, Val94–Phe111, Val121–Ala143, Ile150–Cys164, Ile179–Phe201, Leu206–Ser225, Ile358–Asn375, Leu382–Gly399, and Leu409–Ile431.

It is found in the cell membrane. This is an uncharacterized protein from Escherichia coli (strain K12).